Reading from the N-terminus, the 316-residue chain is MST50-interacting protein 11 (316 aa).

WD repeat units follow at residues 13 to 53, 61 to 100, 103 to 142, 146 to 187, 190 to 229, 231 to 269, and 281 to 316; these read GHNG…TSYG, GHSHIVSDCVISSDGAYALSASWDKTLRLWELATGTTTRR, GHTNDVLSVSFSADNRQIVSGSRDRSIKLWNTLGDCKYTI, GHSE…LQTD, GHTGYINTVTISPDGSLCASGGKDGTTMLWDLNESKHLYS, NANDEIHALVFSPNRYWLCAATASSIIIFDLEKKSKVDE, and SREPECISLAWSADGQTLFAGYTDNIIRAWGVMSRA.

Belongs to the WD repeat G protein beta family. Ribosomal protein RACK1 subfamily. In terms of assembly, interacts with MST50 and MCK1.

Functionally, involved in regulating the cell wall integrity and MPS1 activation via its interaction with the MAPKKK MCK1. In Pyricularia oryzae (strain 70-15 / ATCC MYA-4617 / FGSC 8958) (Rice blast fungus), this protein is MST50-interacting protein 11.